We begin with the raw amino-acid sequence, 339 residues long: Endospore coat-associated protein YutH (339 aa).

This sequence belongs to the CotS family.

It localises to the forespore outer membrane. Its subcellular location is the spore coat. Its function is as follows. Involved in sporulation. This is Endospore coat-associated protein YutH (yutH) from Bacillus subtilis (strain 168).